The chain runs to 431 residues: Phosphoribosylamine--glycine ligase (431 aa).

The ATP-grasp domain maps to 108-315 (KDFLARHEIP…LVLLVEAAFA (208 aa)). 134–195 (LQEKGAPIVI…EEFLDGEEAS (62 aa)) provides a ligand contact to ATP. Residues Glu-285 and Asn-287 each contribute to the Mg(2+) site.

This sequence belongs to the GARS family. It depends on Mg(2+) as a cofactor. The cofactor is Mn(2+).

The catalysed reaction is 5-phospho-beta-D-ribosylamine + glycine + ATP = N(1)-(5-phospho-beta-D-ribosyl)glycinamide + ADP + phosphate + H(+). The protein operates within purine metabolism; IMP biosynthesis via de novo pathway; N(1)-(5-phospho-D-ribosyl)glycinamide from 5-phospho-alpha-D-ribose 1-diphosphate: step 2/2. This chain is Phosphoribosylamine--glycine ligase, found in Pseudomonas putida (strain ATCC 47054 / DSM 6125 / CFBP 8728 / NCIMB 11950 / KT2440).